The following is a 66-amino-acid chain: Small ribosomal subunit protein eS27 (66 aa).

4 residues coordinate Zn(2+): C21, C24, C40, and C43. The C4-type zinc-finger motif lies at 21-43 (CPVCGNEQVIFSHATFPARCLVC).

Belongs to the eukaryotic ribosomal protein eS27 family. Part of the 30S ribosomal subunit. It depends on Zn(2+) as a cofactor.

The chain is Small ribosomal subunit protein eS27 from Hyperthermus butylicus (strain DSM 5456 / JCM 9403 / PLM1-5).